The sequence spans 466 residues: 20-hydroxyecdysone protein (466 aa).

Residues 1-16 form the signal peptide; it reads MKPVALILVFLAISQA. The stretch at 48 to 50 is one 1; approximate repeat; sequence EVK. Residues 48–157 form a 16 X repeats region; it reads EVKAEEVKPE…EIKKEATEIK (110 aa). The stretch at 53–55 is one 2; approximate repeat; that stretch reads EVK. The segment at 55-94 is disordered; sequence KPEEVKPIAQEEKAKDLKEEVKPEIKPEIKEQPKPDIKDE. The 3; approximate repeat unit spans residues 58–60; it reads EVK. One copy of the 4; approximate repeat lies at 70-72; that stretch reads DLK. A 5; approximate repeat occupies 74–76; it reads EVK. Residues 78–80 form a 6; approximate repeat; that stretch reads EIK. One copy of the 7; approximate repeat lies at 82-84; it reads EIK. The 8; approximate repeat unit spans residues 90 to 92; that stretch reads DIK. A 9; approximate repeat occupies 94–96; that stretch reads EIK. Residues 98–100 form a 10; approximate repeat; sequence DLK. An 11; approximate repeat occupies 102–104; sequence DIK. The stretch at 106–108 is one 12; approximate repeat; sequence ELK. The tract at residues 119–220 is disordered; sequence PNAKPLELKE…QQSTTQGNFV (102 aa). Over residues 124–160 the composition is skewed to basic and acidic residues; sequence LELKEKSLEAEEKPQEIKEEVQQPEIKKEATEIKEEP. One copy of the 13; approximate repeat lies at 125–127; it reads ELK. A 14; approximate repeat occupies 139–141; the sequence is EIK. The 15; approximate repeat unit spans residues 148-150; it reads EIK. The 16; approximate repeat unit spans residues 155-157; sequence EIK. Residues 170–180 show a composition bias toward low complexity; the sequence is AEETVVVPAEE. A compositionally biased stretch (polar residues) spans 185–194; it reads PVEQEQSENQ. The segment covering 203–216 has biased composition (low complexity); sequence QATQATPTQQSTTQ. 2 N-linked (GlcNAc...) asparagine glycosylation sites follow: N294 and N352. The tract at residues 378-435 is disordered; it reads RPQNAPAAAPATQATEKPAVDDKIDPANDEVGEFVPESDNELRASGENIDDSFEDAGV. Residues 379–394 show a composition bias toward low complexity; that stretch reads PQNAPAAAPATQATEK. Residues 404–416 show a composition bias toward acidic residues; it reads ANDEVGEFVPESD.

Its subcellular location is the secreted. Functionally, probably has an essential role in embryogenesis, induces morphogenesis of imaginal disks, and may participate in multimolecular aggregates. In Drosophila melanogaster (Fruit fly), this protein is 20-hydroxyecdysone protein (ImpE2).